The following is a 230-amino-acid chain: 7-cyano-7-deazaguanine synthase (230 aa).

Residue 16-26 (LSGGLDSATVV) participates in ATP binding. Cys-195, Cys-205, Cys-208, and Cys-211 together coordinate Zn(2+).

This sequence belongs to the QueC family. It depends on Zn(2+) as a cofactor.

It carries out the reaction 7-carboxy-7-deazaguanine + NH4(+) + ATP = 7-cyano-7-deazaguanine + ADP + phosphate + H2O + H(+). It functions in the pathway purine metabolism; 7-cyano-7-deazaguanine biosynthesis. Catalyzes the ATP-dependent conversion of 7-carboxy-7-deazaguanine (CDG) to 7-cyano-7-deazaguanine (preQ(0)). The chain is 7-cyano-7-deazaguanine synthase from Pseudomonas fluorescens (strain Pf0-1).